The following is a 729-amino-acid chain: Polyribonucleotide nucleotidyltransferase (729 aa).

Residues 399–419 (YMHNYNFPPYSTGETGRVGSP) form a disordered region. 2 residues coordinate Mg(2+): aspartate 509 and aspartate 515. A KH domain is found at 575–634 (PRVISVKIPVDKIGEVIGPKGKMINQIQADSGAEITVEDDGTIYIGAADGPAAETARSAI). The S1 motif domain occupies 646–718 (GERYLGTIVK…ARGKISLAPG (73 aa)).

The protein belongs to the polyribonucleotide nucleotidyltransferase family. It depends on Mg(2+) as a cofactor.

It localises to the cytoplasm. It carries out the reaction RNA(n+1) + phosphate = RNA(n) + a ribonucleoside 5'-diphosphate. Its function is as follows. Involved in mRNA degradation. Catalyzes the phosphorolysis of single-stranded polyribonucleotides processively in the 3'- to 5'-direction. In Parafrankia sp. (strain EAN1pec), this protein is Polyribonucleotide nucleotidyltransferase.